Consider the following 366-residue polypeptide: NADH-quinone oxidoreductase subunit D (366 aa).

The protein belongs to the complex I 49 kDa subunit family. As to quaternary structure, NDH-1 is composed of 14 different subunits. Subunits NuoB, C, D, E, F, and G constitute the peripheral sector of the complex.

It is found in the cell membrane. It catalyses the reaction a quinone + NADH + 5 H(+)(in) = a quinol + NAD(+) + 4 H(+)(out). Its function is as follows. NDH-1 shuttles electrons from NADH, via FMN and iron-sulfur (Fe-S) centers, to quinones in the respiratory chain. The immediate electron acceptor for the enzyme in this species is believed to be a menaquinone. Couples the redox reaction to proton translocation (for every two electrons transferred, four hydrogen ions are translocated across the cytoplasmic membrane), and thus conserves the redox energy in a proton gradient. This is NADH-quinone oxidoreductase subunit D from Desulforamulus reducens (strain ATCC BAA-1160 / DSM 100696 / MI-1) (Desulfotomaculum reducens).